We begin with the raw amino-acid sequence, 182 residues long: NADH-quinone oxidoreductase subunit C 2 (182 aa).

A disordered region spans residues 153–182; sequence YKDKLNPFGAEGPPPTQPDLATNDIPQGGR.

The protein belongs to the complex I 30 kDa subunit family. NDH-1 is composed of 14 different subunits. Subunits NuoB, C, D, E, F, and G constitute the peripheral sector of the complex.

The protein resides in the cell inner membrane. It catalyses the reaction a quinone + NADH + 5 H(+)(in) = a quinol + NAD(+) + 4 H(+)(out). In terms of biological role, NDH-1 shuttles electrons from NADH, via FMN and iron-sulfur (Fe-S) centers, to quinones in the respiratory chain. The immediate electron acceptor for the enzyme in this species is believed to be ubiquinone. Couples the redox reaction to proton translocation (for every two electrons transferred, four hydrogen ions are translocated across the cytoplasmic membrane), and thus conserves the redox energy in a proton gradient. The sequence is that of NADH-quinone oxidoreductase subunit C 2 from Rhizobium meliloti (strain 1021) (Ensifer meliloti).